Consider the following 158-residue polypeptide: Chromobox protein homolog 7 (158 aa).

In terms of domain architecture, Chromo spans Phe11 to Tyr69. The interval Lys60–Val127 is disordered. Over residues Gly68–Arg78 the composition is skewed to basic residues.

As to quaternary structure, component of a PRC1-like complex. Distinct PRC1-like core complexes are composed of a RING1 subunit (RING1B or RING1A), one of the six PCGF proteins (PCGF1-6), one PHC protein (PHC1-3) and one of the CBX proteins (CBX2, CBX4, CBX6, CBX7 or CBX8). The composition of the PRC1 complex may differ between the PRC1 complex in pluripotent embryonic stem cells containing RNF2, CBX7 and PCGF2, and the PRC1 complex in differentiating cells containing RNF2, CBX2, CBX4 and BMI1. Interacts with RING1. Interacts with RNF2, PHC1 and PCGF2. Interacts (via chromodomain) with histone H3K9Me3 and H3K27me3. Interacts with H3K9Me2 and H4K20Me1. Interacts (via chromodomain) with single-stranded and double-stranded RNA; RNA binding seems to be required for the localization to chromatin. Interacts with PCGF1, PCGF3, PCGF5 and PCGF6. In terms of tissue distribution, expressed in embryonic stem cells.

Its subcellular location is the nucleus. The protein localises to the chromosome. In terms of biological role, component of a Polycomb group (PcG) multiprotein PRC1-like complex, a complex class required to maintain the transcriptionally repressive state of many genes, including Hox genes, throughout development. PcG PRC1 complex acts via chromatin remodeling and modification of histones; it mediates monoubiquitination of histone H2A 'Lys-119', rendering chromatin heritably changed in its expressibility. Promotes histone H3 trimethylation at 'Lys-9' (H3K9me3). Binds to histone H3 trimethylated at 'Lys-9' (H3K9me3) or at 'Lys-27' (H3K27me3). Trimethylation at 'Lys-27' (H3K27me3) is important for chromatin recruitment. May possibly also bind trimethylated lysine residues in other proteins (in vitro). Binds non-coding, single-stranded RNA and double-stranded RNA. Plays a role in the timely repression of differentiation-specific genes in pluripotent embryonic stem cells to maintain the undifferentiated state. Regulator of cellular lifespan by maintaining the repression of CDKN2A, but not by inducing telomerase activity. The protein is Chromobox protein homolog 7 (Cbx7) of Mus musculus (Mouse).